A 238-amino-acid chain; its full sequence is Ribonuclease 3 (238 aa).

The region spanning 8-135 (VAELERRIGY…LIAALYIDGG (128 aa)) is the RNase III domain. A Mg(2+)-binding site is contributed by Glu48. The active site involves Asp52. Residues Asp121 and Glu124 each contribute to the Mg(2+) site. Residue Glu124 is part of the active site. Positions 161-230 (DPKTQLQEWV…AQCMLLKREG (70 aa)) constitute a DRBM domain.

This sequence belongs to the ribonuclease III family. Homodimer. It depends on Mg(2+) as a cofactor.

The protein localises to the cytoplasm. It catalyses the reaction Endonucleolytic cleavage to 5'-phosphomonoester.. Functionally, digests double-stranded RNA. Involved in the processing of primary rRNA transcript to yield the immediate precursors to the large and small rRNAs (23S and 16S). Processes some mRNAs, and tRNAs when they are encoded in the rRNA operon. Processes pre-crRNA and tracrRNA of type II CRISPR loci if present in the organism. This is Ribonuclease 3 from Phenylobacterium zucineum (strain HLK1).